The sequence spans 90 residues: Probable Fe(2+)-trafficking protein (90 aa).

It belongs to the Fe(2+)-trafficking protein family.

Could be a mediator in iron transactions between iron acquisition and iron-requiring processes, such as synthesis and/or repair of Fe-S clusters in biosynthetic enzymes. This Aeromonas hydrophila subsp. hydrophila (strain ATCC 7966 / DSM 30187 / BCRC 13018 / CCUG 14551 / JCM 1027 / KCTC 2358 / NCIMB 9240 / NCTC 8049) protein is Probable Fe(2+)-trafficking protein.